A 201-amino-acid chain; its full sequence is Ribosome maturation factor RimP (201 aa).

Positions 180–201 (LRRGSAPAQDEEGEDEAPGAPL) are disordered. Over residues 188-201 (QDEEGEDEAPGAPL) the composition is skewed to acidic residues.

It belongs to the RimP family.

It is found in the cytoplasm. Its function is as follows. Required for maturation of 30S ribosomal subunits. This chain is Ribosome maturation factor RimP, found in Methylobacterium sp. (strain 4-46).